Consider the following 433-residue polypeptide: Glutamate-1-semialdehyde 2,1-aminomutase (433 aa).

Lys265 is modified (N6-(pyridoxal phosphate)lysine).

It belongs to the class-III pyridoxal-phosphate-dependent aminotransferase family. HemL subfamily. Homodimer. Pyridoxal 5'-phosphate is required as a cofactor.

It is found in the cytoplasm. The enzyme catalyses (S)-4-amino-5-oxopentanoate = 5-aminolevulinate. The protein operates within porphyrin-containing compound metabolism; protoporphyrin-IX biosynthesis; 5-aminolevulinate from L-glutamyl-tRNA(Glu): step 2/2. This is Glutamate-1-semialdehyde 2,1-aminomutase from Shewanella denitrificans (strain OS217 / ATCC BAA-1090 / DSM 15013).